A 300-amino-acid polypeptide reads, in one-letter code: FSMKNFHRRAKLEDPEENGVFKYRPRYYLYKHAYFYPPLKRFPVQSSSDSSEENGNGDSSEEEEEEEENSNEEENNEENEDSDGNEDEDSEAENITLSTTTLGYGGDVTPGTASIGLAALQLPKKAGDIGKKSAKEEESDEDEEEEEENEENEAEVDDNEQGTNGTSTNSTEVDSGNGHSGGDNGEEGDQESVTEAQGTTVAGEQDNGGAKTTTSPNGGLEPTPPPQDISGTTLPPSGKTTTPEYEGEYEQTGAHEYDNGYEIYESENGEPRGDSYRAYEDEYSYYKGRSYNSYGGHDYY.

The interval 41 to 258 is disordered; sequence RFPVQSSSDS…YEQTGAHEYD (218 aa). Phosphoserine is present on residues S46, S51, S59, S60, S82, and S90. The segment covering 46–58 has biased composition (low complexity); sequence SSSDSSEENGNGD. The segment covering 59–92 has biased composition (acidic residues); that stretch reads SSEEEEEEEENSNEEENNEENEDSDGNEDEDSEA. A compositionally biased stretch (polar residues) spans 93-102; it reads ENITLSTTTL. N-linked (GlcNAc...) asparagine glycosylation is present at N94. A compositionally biased stretch (basic and acidic residues) spans 125-136; the sequence is KAGDIGKKSAKE. A compositionally biased stretch (acidic residues) spans 137–160; it reads EESDEDEEEEEENEENEAEVDDNE. A Phosphoserine modification is found at S139. 3 stretches are compositionally biased toward polar residues: residues 161–173, 193–202, and 229–243; these read QGTN…STEV, VTEAQGTTVA, and ISGT…TTTP. N-linked (GlcNAc...) asparagine glycans are attached at residues N164 and N169. At S266 the chain carries Phosphoserine. Residues 272–274 carry the Integrin-binding motif motif; it reads RGD. Position 293 is a phosphoserine (S293). 2 positions are modified to sulfotyrosine: Y299 and Y300.

Monomer. Interacts with integrins; the interaction promotes cell adhesion.

It is found in the secreted. Its function is as follows. Binds tightly to hydroxyapatite. Appears to form an integral part of the mineralized matrix. Probably important to cell-matrix interaction. Promotes adhesion and migration of various cells via the alpha-V/beta-3 integrin receptor (ITGAV:ITGB3). In Sus scrofa (Pig), this protein is Integrin-binding sialoprotein (IBSP).